The following is a 228-amino-acid chain: Urease accessory protein UreF (228 aa).

The protein belongs to the UreF family. In terms of assembly, ureD, UreF and UreG form a complex that acts as a GTP-hydrolysis-dependent molecular chaperone, activating the urease apoprotein by helping to assemble the nickel containing metallocenter of UreC. The UreE protein probably delivers the nickel.

Its subcellular location is the cytoplasm. Required for maturation of urease via the functional incorporation of the urease nickel metallocenter. The sequence is that of Urease accessory protein UreF from Prochlorococcus marinus (strain AS9601).